The primary structure comprises 495 residues: Hydroxyneurosporene desaturase (495 aa).

Belongs to the carotenoid/retinoid oxidoreductase family.

It carries out the reaction rhodopin + A = (3E)-3,4-didehydrorhodopin + AH2. It functions in the pathway carotenoid biosynthesis; spheroidene biosynthesis. Its function is as follows. Catalyzes the introduction of C-3,4 double bonds into 1-hydroxyneurosporene (1-HO-Neu) to yield demethylspheroidene (DMS). It prefer the acyclic carotenoids such as 1-hydroxylycopene, and 1-hydroxy-gamma-carotene, whereas 1-hydroxy-3,4-didehydrolycopene and 1,1-dihydroxylycopene are much less effective. The polypeptide is Hydroxyneurosporene desaturase (crtD) (Cereibacter sphaeroides (strain ATCC 17023 / DSM 158 / JCM 6121 / CCUG 31486 / LMG 2827 / NBRC 12203 / NCIMB 8253 / ATH 2.4.1.) (Rhodobacter sphaeroides)).